Reading from the N-terminus, the 349-residue chain is 3-dehydroquinate synthase (349 aa).

Residues 63-68, 97-101, 121-122, Lys134, Lys143, and 161-164 contribute to the NAD(+) site; these read DGEEYK, GVIGD, TT, and FLTT. Glu176, His235, and His252 together coordinate Zn(2+).

Belongs to the sugar phosphate cyclases superfamily. Dehydroquinate synthase family. Co(2+) serves as cofactor. Requires Zn(2+) as cofactor. The cofactor is NAD(+).

The protein resides in the cytoplasm. It catalyses the reaction 7-phospho-2-dehydro-3-deoxy-D-arabino-heptonate = 3-dehydroquinate + phosphate. It functions in the pathway metabolic intermediate biosynthesis; chorismate biosynthesis; chorismate from D-erythrose 4-phosphate and phosphoenolpyruvate: step 2/7. Functionally, catalyzes the conversion of 3-deoxy-D-arabino-heptulosonate 7-phosphate (DAHP) to dehydroquinate (DHQ). The chain is 3-dehydroquinate synthase from Sulfurimonas denitrificans (strain ATCC 33889 / DSM 1251) (Thiomicrospira denitrificans (strain ATCC 33889 / DSM 1251)).